We begin with the raw amino-acid sequence, 85 residues long: Protein C4 (85 aa).

G2 carries N-myristoyl glycine; by host lipidation. The disordered stretch occupies residues 42 to 65; the sequence is LNPAPTSTPTSTRTETLSNGENSR. Low complexity predominate over residues 44–59; that stretch reads PAPTSTPTSTRTETLS.

It belongs to the geminiviridae protein AC4/C4 family.

The protein localises to the host cell membrane. In terms of biological role, pathogenicity determinant. May act as a suppressor of RNA-mediated gene silencing, also known as post-transcriptional gene silencing (PTGS), a mechanism of plant viral defense that limits the accumulation of viral RNAs. The sequence is that of Protein C4 from Solanum lycopersicum (Tomato).